The primary structure comprises 340 residues: UDP-3-O-(3-hydroxymyristoyl)glucosamine N-acyltransferase (340 aa).

Catalysis depends on His-239, which acts as the Proton acceptor.

This sequence belongs to the transferase hexapeptide repeat family. LpxD subfamily. As to quaternary structure, homotrimer.

It catalyses the reaction a UDP-3-O-[(3R)-3-hydroxyacyl]-alpha-D-glucosamine + a (3R)-hydroxyacyl-[ACP] = a UDP-2-N,3-O-bis[(3R)-3-hydroxyacyl]-alpha-D-glucosamine + holo-[ACP] + H(+). The catalysed reaction is UDP-3-O-[(3R)-3-hydroxytetradecanoyl]-alpha-D-glucosamine + (3R)-hydroxytetradecanoyl-[ACP] = UDP-2-N,3-O-bis[(3R)-3-hydroxytetradecanoyl]-alpha-D-glucosamine + holo-[ACP] + H(+). The protein operates within glycolipid biosynthesis; lipid IV(A) biosynthesis; lipid IV(A) from (3R)-3-hydroxytetradecanoyl-[acyl-carrier-protein] and UDP-N-acetyl-alpha-D-glucosamine: step 3/6. Its function is as follows. Catalyzes the N-acylation of UDP-3-O-(hydroxytetradecanoyl)glucosamine using 3-hydroxytetradecanoyl-ACP as the acyl donor. Is involved in the biosynthesis of lipid A, a phosphorylated glycolipid that anchors the lipopolysaccharide to the outer membrane of the cell. The polypeptide is UDP-3-O-(3-hydroxymyristoyl)glucosamine N-acyltransferase (Pectobacterium atrosepticum (strain SCRI 1043 / ATCC BAA-672) (Erwinia carotovora subsp. atroseptica)).